The chain runs to 367 residues: MRRMLVIRWILAIHLIATQVFAERIKDIATLAGVRVNQLVGYGLVVGLSGTGDKTGTKFTEDSFANMLTQLGINVPPGVRLNSKNIAAVMVTANLSSFMKKGQTMDVNISSIGDSKSLLGGTLLLTPLKGADGRVYAMSQGNVVVSGISASGSDGSSVTVNIPSGGRIPNGATIEADIPNPFYYSNSLTYNLHTPDFTTAKRMSDAINELMGPGTAKAIDAGSVVVTAPKKLSQRVDYVSVLENIEFKPGEAMAKIIINARTGTVVISSNVIVKSAAVSHGNLVVSITETPVISQPNAFASGRTVATQQSQVNIQQKNNRAFILPKGTTLKDIVRGINAVGATPADVISILEALQQAGALSATLIVI.

An N-terminal signal peptide occupies residues 1–22 (MRRMLVIRWILAIHLIATQVFA).

This sequence belongs to the FlgI family. As to quaternary structure, the basal body constitutes a major portion of the flagellar organelle and consists of four rings (L,P,S, and M) mounted on a central rod.

The protein localises to the periplasm. It localises to the bacterial flagellum basal body. Its function is as follows. Assembles around the rod to form the L-ring and probably protects the motor/basal body from shearing forces during rotation. This is Flagellar P-ring protein from Legionella pneumophila (strain Lens).